The following is a 179-amino-acid chain: tRNA (cytidine(56)-2'-O)-methyltransferase (179 aa).

S-adenosyl-L-methionine contacts are provided by residues Leu-82, 112–116, and 130–137; these read GAEKV and VGNQPHSE.

This sequence belongs to the aTrm56 family. Homodimer.

It is found in the cytoplasm. It carries out the reaction cytidine(56) in tRNA + S-adenosyl-L-methionine = 2'-O-methylcytidine(56) in tRNA + S-adenosyl-L-homocysteine + H(+). Functionally, specifically catalyzes the AdoMet-dependent 2'-O-ribose methylation of cytidine at position 56 in tRNAs. This Methanococcus maripaludis (strain C6 / ATCC BAA-1332) protein is tRNA (cytidine(56)-2'-O)-methyltransferase.